The chain runs to 285 residues: Type II secretion system protein C (285 aa).

Over 1–27 the chain is Cytoplasmic; the sequence is MSKGIKMHNSVMRLTIPNKKIINYAPH. A helical membrane pass occupies residues 28–46; the sequence is IVTSIILFFICQQLAQLTW. The Periplasmic segment spans residues 47 to 285; it reads KIILPVNFTD…NDIYLALRDE (239 aa).

Belongs to the GSP C family.

Its subcellular location is the cell inner membrane. Its function is as follows. Involved in a type II secretion system (T2SS, formerly general secretion pathway, GSP) for the export of proteins. Required for the translocation of pullulanase. This chain is Type II secretion system protein C (pulC), found in Klebsiella pneumoniae.